We begin with the raw amino-acid sequence, 367 residues long: Histidinol-phosphate aminotransferase (367 aa).

The residue at position 222 (Lys222) is an N6-(pyridoxal phosphate)lysine.

The protein belongs to the class-II pyridoxal-phosphate-dependent aminotransferase family. Histidinol-phosphate aminotransferase subfamily. It depends on pyridoxal 5'-phosphate as a cofactor.

The enzyme catalyses L-histidinol phosphate + 2-oxoglutarate = 3-(imidazol-4-yl)-2-oxopropyl phosphate + L-glutamate. Its pathway is amino-acid biosynthesis; L-histidine biosynthesis; L-histidine from 5-phospho-alpha-D-ribose 1-diphosphate: step 7/9. The sequence is that of Histidinol-phosphate aminotransferase from Methanosphaera stadtmanae (strain ATCC 43021 / DSM 3091 / JCM 11832 / MCB-3).